The sequence spans 147 residues: Acidic phospholipase A2 1 (147 aa).

The signal sequence occupies residues 1–19 (MNPAHLLVLAAVCVSLLGA). A propeptide spanning residues 20-27 (AIVPPQPL) is cleaved from the precursor. 7 disulfide bridges follow: Cys-38-Cys-99, Cys-54-Cys-146, Cys-56-Cys-72, Cys-71-Cys-127, Cys-78-Cys-120, Cys-88-Cys-113, and Cys-106-Cys-118. The Ca(2+) site is built by Tyr-55, Gly-57, and Gly-59. The active site involves His-75. Asp-76 is a binding site for Ca(2+). Asp-121 is an active-site residue.

The protein belongs to the phospholipase A2 family. Group I subfamily. D49 sub-subfamily. Ca(2+) serves as cofactor. Expressed by the venom gland.

It is found in the secreted. The enzyme catalyses a 1,2-diacyl-sn-glycero-3-phosphocholine + H2O = a 1-acyl-sn-glycero-3-phosphocholine + a fatty acid + H(+). In terms of biological role, PLA2 catalyzes the calcium-dependent hydrolysis of the 2-acyl groups in 3-sn-phosphoglycerides. In Bungarus flaviceps flaviceps (Red-headed krait), this protein is Acidic phospholipase A2 1.